The chain runs to 89 residues: Small ribosomal subunit protein uS15 (89 aa).

Belongs to the universal ribosomal protein uS15 family. As to quaternary structure, part of the 30S ribosomal subunit. Forms a bridge to the 50S subunit in the 70S ribosome, contacting the 23S rRNA.

Its function is as follows. One of the primary rRNA binding proteins, it binds directly to 16S rRNA where it helps nucleate assembly of the platform of the 30S subunit by binding and bridging several RNA helices of the 16S rRNA. Forms an intersubunit bridge (bridge B4) with the 23S rRNA of the 50S subunit in the ribosome. The sequence is that of Small ribosomal subunit protein uS15 from Chlorobium limicola (strain DSM 245 / NBRC 103803 / 6330).